The primary structure comprises 131 residues: Small ribosomal subunit protein uS9 (131 aa).

This sequence belongs to the universal ribosomal protein uS9 family.

In Mannheimia succiniciproducens (strain KCTC 0769BP / MBEL55E), this protein is Small ribosomal subunit protein uS9.